We begin with the raw amino-acid sequence, 285 residues long: Tryptophan synthase alpha chain (285 aa).

Catalysis depends on proton acceptor residues E53 and D64.

The protein belongs to the TrpA family. Tetramer of two alpha and two beta chains.

The catalysed reaction is (1S,2R)-1-C-(indol-3-yl)glycerol 3-phosphate + L-serine = D-glyceraldehyde 3-phosphate + L-tryptophan + H2O. It functions in the pathway amino-acid biosynthesis; L-tryptophan biosynthesis; L-tryptophan from chorismate: step 5/5. Functionally, the alpha subunit is responsible for the aldol cleavage of indoleglycerol phosphate to indole and glyceraldehyde 3-phosphate. This Bordetella pertussis (strain Tohama I / ATCC BAA-589 / NCTC 13251) protein is Tryptophan synthase alpha chain.